A 129-amino-acid chain; its full sequence is Mini-ribonuclease 3-like protein (129 aa).

Asp-23 is an active-site residue.

It belongs to the MrnC RNase family.

Its function is as follows. Might be a ribonuclease involved in RNA processing. This is Mini-ribonuclease 3-like protein (mrnCL) from Fusobacterium nucleatum subsp. nucleatum (strain ATCC 25586 / DSM 15643 / BCRC 10681 / CIP 101130 / JCM 8532 / KCTC 2640 / LMG 13131 / VPI 4355).